The chain runs to 364 residues: Ferrochelatase (364 aa).

Fe cation is bound by residues His211 and Glu292.

This sequence belongs to the ferrochelatase family.

The protein resides in the cytoplasm. It catalyses the reaction heme b + 2 H(+) = protoporphyrin IX + Fe(2+). Its pathway is porphyrin-containing compound metabolism; protoheme biosynthesis; protoheme from protoporphyrin-IX: step 1/1. Functionally, catalyzes the ferrous insertion into protoporphyrin IX. The sequence is that of Ferrochelatase from Nitrosomonas europaea (strain ATCC 19718 / CIP 103999 / KCTC 2705 / NBRC 14298).